The following is a 311-amino-acid chain: tRNA (guanine-N(7)-)-methyltransferase (311 aa).

3 residues coordinate S-adenosyl-L-methionine: Glu-28, Glu-53, and Asp-103. Residue Asp-103 is part of the active site. 2 residues coordinate substrate: Lys-107 and Asp-139.

Belongs to the class I-like SAM-binding methyltransferase superfamily. TrmB family.

It catalyses the reaction guanosine(46) in tRNA + S-adenosyl-L-methionine = N(7)-methylguanosine(46) in tRNA + S-adenosyl-L-homocysteine. It functions in the pathway tRNA modification; N(7)-methylguanine-tRNA biosynthesis. Its function is as follows. Catalyzes the formation of N(7)-methylguanine at position 46 (m7G46) in tRNA. The polypeptide is tRNA (guanine-N(7)-)-methyltransferase (Thermus thermophilus (strain ATCC BAA-163 / DSM 7039 / HB27)).